The following is a 397-amino-acid chain: Elongation factor Tu (397 aa).

In terms of domain architecture, tr-type G spans Lys-10 to Gln-206. Residues Gly-19–Thr-26 are G1. Residue Gly-19–Thr-26 participates in GTP binding. Mg(2+) is bound at residue Thr-26. Positions Gly-62–Ser-66 are G2. The G3 stretch occupies residues Asp-83–Gly-86. GTP contacts are provided by residues Asp-83 to His-87 and Asn-138 to Asp-141. Residues Asn-138 to Asp-141 form a G4 region. Positions Ser-176–Leu-178 are G5.

It belongs to the TRAFAC class translation factor GTPase superfamily. Classic translation factor GTPase family. EF-Tu/EF-1A subfamily. As to quaternary structure, monomer.

It localises to the cytoplasm. The catalysed reaction is GTP + H2O = GDP + phosphate + H(+). Functionally, GTP hydrolase that promotes the GTP-dependent binding of aminoacyl-tRNA to the A-site of ribosomes during protein biosynthesis. This Thermobifida fusca (strain YX) protein is Elongation factor Tu.